The chain runs to 456 residues: Exodeoxyribonuclease 7 large subunit (456 aa).

Positions methionine 1 to glutamine 103 are binds ssDNA, also required to bind the small subunit.

It belongs to the XseA family. In terms of assembly, heterooligomer composed of two different subunits with an approximate ratio of 4:1 for small to large subunit. Also estimated to have a 6:1 ration for small to large subunits. Does not require a metal cofactor. is required as a cofactor.

Its subcellular location is the cytoplasm. It catalyses the reaction Exonucleolytic cleavage in either 5'- to 3'- or 3'- to 5'-direction to yield nucleoside 5'-phosphates.. Bidirectionally degrades single-stranded DNA into large acid-insoluble oligonucleotides, which are then degraded further into small acid-soluble oligonucleotides. It can degrade 3' or 5' ss regions extending from the termini of duplex DNA molecules and displaced ss regions. It can also excise thymine dimers in vitro. ssDNA-binding requires both subunits. Required for production of the mature 5'-end of retron Ec78 or Ec83 msDNA. Overproduction of this subunit in the absence of an equivalent quantity of the small subunit is toxic, causing cell elongation and chromosome fragmentation or loss; its toxicity is mostly suppressed by RecA. In Escherichia coli (strain K12), this protein is Exodeoxyribonuclease 7 large subunit.